An 89-amino-acid polypeptide reads, in one-letter code: Large ribosomal subunit protein eL34 (89 aa).

The segment at 1–22 is disordered; sequence MPAPRYKSGSSKKVYRKAPGNS.

The protein belongs to the eukaryotic ribosomal protein eL34 family.

In Methanococcus maripaludis (strain C5 / ATCC BAA-1333), this protein is Large ribosomal subunit protein eL34.